The chain runs to 684 residues: Threonine--tRNA ligase (684 aa).

One can recognise a TGS domain in the interval Met1–Ala66. The interval Asp261–Pro567 is catalytic. Zn(2+) is bound by residues Cys366, His417, and His544.

It belongs to the class-II aminoacyl-tRNA synthetase family. As to quaternary structure, homodimer. Zn(2+) serves as cofactor.

Its subcellular location is the cytoplasm. The catalysed reaction is tRNA(Thr) + L-threonine + ATP = L-threonyl-tRNA(Thr) + AMP + diphosphate + H(+). Catalyzes the attachment of threonine to tRNA(Thr) in a two-step reaction: L-threonine is first activated by ATP to form Thr-AMP and then transferred to the acceptor end of tRNA(Thr). Also edits incorrectly charged L-seryl-tRNA(Thr). The protein is Threonine--tRNA ligase of Mycolicibacterium paratuberculosis (strain ATCC BAA-968 / K-10) (Mycobacterium paratuberculosis).